We begin with the raw amino-acid sequence, 247 residues long: tRNA (guanine-N(1)-)-methyltransferase (247 aa).

Residues G115 and 134-139 (IGDFVL) contribute to the S-adenosyl-L-methionine site.

This sequence belongs to the RNA methyltransferase TrmD family. As to quaternary structure, homodimer.

It is found in the cytoplasm. The enzyme catalyses guanosine(37) in tRNA + S-adenosyl-L-methionine = N(1)-methylguanosine(37) in tRNA + S-adenosyl-L-homocysteine + H(+). Specifically methylates guanosine-37 in various tRNAs. The polypeptide is tRNA (guanine-N(1)-)-methyltransferase (Anaeromyxobacter sp. (strain K)).